A 309-amino-acid chain; its full sequence is NmrA-like family domain-containing protein 1 (309 aa).

NADP(+)-binding positions include 11 to 16, 37 to 41, 58 to 59, 79 to 81, K102, K143, and 165 to 168; these read GATGAQ, RNPEQ, DQ, TNY, and YFEN. Residues 163 to 199 form an interaction with ASS1 region; it reads PCYFENLLSYFLPQKAADGKSFLLDLPMGDVPMDGMS.

Belongs to the NmrA-type oxidoreductase family. In terms of assembly, homodimer. Interacts with ASS1. Interaction is enhanced by low NADPH/NADP(+) ratios, which results in inhibition of ASS1 activity.

It is found in the cytoplasm. The protein resides in the perinuclear region. The protein localises to the nucleus. Functionally, redox sensor protein. Undergoes restructuring and subcellular redistribution in response to changes in intracellular NADPH/NADP(+) levels. At low NADPH concentrations the protein is found mainly as a monomer, and binds argininosuccinate synthase (ASS1), the enzyme involved in nitric oxide synthesis. Association with ASS1 impairs its activity and reduces the production of nitric oxide, which subsecuently prevents apoptosis. Under normal NADPH concentrations, the protein is found as a dimer and hides the binding site for ASS1. The homodimer binds one molecule of NADPH. Has higher affinity for NADPH than for NADP(+). Binding to NADPH is necessary to form a stable dimer. In Mus musculus (Mouse), this protein is NmrA-like family domain-containing protein 1 (Nmral1).